The following is a 250-amino-acid chain: Hemocyanin, units C and D (250 aa).

H1 contacts Cu cation. The segment at 1 to 106 (HGSTKWCPSP…RAWIEPVTSA (106 aa)) is unit C. C7 and C18 are joined by a disulfide. Residues 19 to 21 (CHH) constitute a cross-link (2'-(S-cysteinyl)-histidine (Cys-His)). Cu cation contacts are provided by H21 and H143. Residues 107 to 250 (VRIRKNLNDL…DAQDVIYNNH (144 aa)) are unit D. C149 and C160 form a disulfide bridge. The 2'-(S-cysteinyl)-histidine (Cys-His) cross-link spans 161 to 163 (CLH). H172 provides a ligand contact to Cu cation.

It belongs to the tyrosinase family. Hemocyanin subfamily. As to quaternary structure, decamers of large identical subunits (390 kDa), each containing 8 globular oxygen-binding functional units. Requires Cu(2+) as cofactor.

Its function is as follows. Hemocyanins are copper-containing oxygen carriers occurring freely dissolved in the hemolymph of many mollusks and arthropods. The protein is Hemocyanin, units C and D of Sepia officinalis (Common cuttlefish).